Here is a 27-residue protein sequence, read N- to C-terminus: Delta-conotoxin TsVIA (27 aa).

3 disulfide bridges follow: Cys-1-Cys-17, Cys-8-Cys-21, and Cys-16-Cys-25.

This sequence belongs to the conotoxin O1 superfamily. In terms of tissue distribution, expressed by the venom duct.

The protein resides in the secreted. Functionally, delta-conotoxins bind to site 6 of voltage-gated sodium channels (Nav) and inhibit the inactivation process. This toxin inhibits tetrodotoxin(TTX)-sensitive sodium channels. A test on mouse Nav1.6/SCN8A confirms this sensitivity. This chain is Delta-conotoxin TsVIA, found in Conus tessulatus (Tessellate cone).